The primary structure comprises 1457 residues: Eye-specific diacylglycerol kinase (1457 aa).

Disordered stretches follow at residues 1–123 (MQQQ…SSEA), 136–177 (RSHS…PPCI), and 207–339 (YSNT…QPTT). 3 stretches are compositionally biased toward low complexity: residues 22–62 (SATT…LRTT), 98–115 (SQRASSSLLKQQSSSSAS), and 141–154 (DSATASAGSDDSGT). Residues 214–253 (ASEDEDEVEGHNAEEEEEGSAAIEDAEEETTEAATEEADE) show a composition bias toward acidic residues. Positions 254 to 266 (DPRTEVESEHDHD) are enriched in basic and acidic residues. Positions 294-303 (RLPRQMRRHT) are enriched in basic residues. 2 consecutive Phorbol-ester/DAG-type zinc fingers follow at residues 591 to 641 (HYWK…TLAC) and 661 to 724 (HHWV…GEEC). The disordered stretch occupies residues 758–799 (NNAASGSGGGGAGGGAGGGGGKSKKQTQRRQKGKEEKKEPRA). Residues 763–778 (GSGGGGAGGGAGGGGG) are compositionally biased toward gly residues. Residues 779-789 (KSKKQTQRRQK) show a composition bias toward basic residues. In terms of domain architecture, DAGKc spans 808–944 (PEVIPVIVFI…MDRWRVKVTP (137 aa)). Residues 1264–1302 (TPDQERSFAAFSQRQAQNERRQMDQAQGRGPGSTDEDLQ) form a disordered region. ANK repeat units lie at residues 1320–1349 (QTSDAILLAAQSGDLNMLRALHEQGYSLQS), 1353–1382 (NGQTALHFACKYNHRDIVKYIIASATRRLI), 1389–1418 (LGQTALHIAAEQNRRDICVMLVAAGAHLDT), and 1422–1451 (GGNTPMMVAFNKNANEIATYLESKQGTQPV).

The protein belongs to the eukaryotic diacylglycerol kinase family. Expressed specifically in adult eye.

The protein resides in the membrane. The catalysed reaction is a 1,2-diacyl-sn-glycerol + ATP = a 1,2-diacyl-sn-glycero-3-phosphate + ADP + H(+). Its function is as follows. Required for the maintenance of phospholipid turnover within the photoreceptor. This is Eye-specific diacylglycerol kinase (rdgA) from Drosophila melanogaster (Fruit fly).